Consider the following 281-residue polypeptide: Foldase protein PrsA (281 aa).

An N-terminal signal peptide occupies residues 1–18 (MKKWMMAAAVVSLMALSA). Residue C19 is the site of N-palmitoyl cysteine attachment. C19 carries the S-diacylglycerol cysteine lipid modification. Positions 133 to 223 (KPKIRASHIL…YGYHIIKVTD (91 aa)) constitute a PpiC domain.

It belongs to the PrsA family.

The protein resides in the cell membrane. The catalysed reaction is [protein]-peptidylproline (omega=180) = [protein]-peptidylproline (omega=0). In terms of biological role, plays a major role in protein secretion by helping the post-translocational extracellular folding of several secreted proteins. This Geobacillus kaustophilus (strain HTA426) protein is Foldase protein PrsA.